The sequence spans 294 residues: Ribosomal RNA small subunit methyltransferase H (294 aa).

S-adenosyl-L-methionine contacts are provided by residues 40 to 42 (GGH), D59, F86, D102, and Q109.

It belongs to the methyltransferase superfamily. RsmH family.

It is found in the cytoplasm. It catalyses the reaction cytidine(1402) in 16S rRNA + S-adenosyl-L-methionine = N(4)-methylcytidine(1402) in 16S rRNA + S-adenosyl-L-homocysteine + H(+). Functionally, specifically methylates the N4 position of cytidine in position 1402 (C1402) of 16S rRNA. This Cyanothece sp. (strain PCC 7425 / ATCC 29141) protein is Ribosomal RNA small subunit methyltransferase H.